The primary structure comprises 189 residues: ATP synthase subunit b 1 (189 aa).

A helical membrane pass occupies residues 32-52; that stretch reads TYFASQLFWLTIAFVILYIAL.

The protein belongs to the ATPase B chain family. As to quaternary structure, F-type ATPases have 2 components, F(1) - the catalytic core - and F(0) - the membrane proton channel. F(1) has five subunits: alpha(3), beta(3), gamma(1), delta(1), epsilon(1). F(0) has three main subunits: a(1), b(2) and c(10-14). The alpha and beta chains form an alternating ring which encloses part of the gamma chain. F(1) is attached to F(0) by a central stalk formed by the gamma and epsilon chains, while a peripheral stalk is formed by the delta and b chains.

The protein localises to the cell inner membrane. Functionally, f(1)F(0) ATP synthase produces ATP from ADP in the presence of a proton or sodium gradient. F-type ATPases consist of two structural domains, F(1) containing the extramembraneous catalytic core and F(0) containing the membrane proton channel, linked together by a central stalk and a peripheral stalk. During catalysis, ATP synthesis in the catalytic domain of F(1) is coupled via a rotary mechanism of the central stalk subunits to proton translocation. In terms of biological role, component of the F(0) channel, it forms part of the peripheral stalk, linking F(1) to F(0). This chain is ATP synthase subunit b 1, found in Maricaulis maris (strain MCS10) (Caulobacter maris).